Consider the following 374-residue polypeptide: Phosphatidylglycerol--prolipoprotein diacylglyceryl transferase (374 aa).

A run of 4 helical transmembrane segments spans residues 33–53 (ICFI…IALF), 155–175 (LCWF…VFFY), 195–215 (LASH…TSYI), and 222–242 (LSFL…AVFI). Position 243 (R243) interacts with a 1,2-diacyl-sn-glycero-3-phospho-(1'-sn-glycerol). Transmembrane regions (helical) follow at residues 279 to 299 (PVQL…FTLW), 306 to 326 (LAAG…RFLL), and 341 to 361 (ILQM…CLVW).

Belongs to the Lgt family.

It is found in the cell inner membrane. The enzyme catalyses L-cysteinyl-[prolipoprotein] + a 1,2-diacyl-sn-glycero-3-phospho-(1'-sn-glycerol) = an S-1,2-diacyl-sn-glyceryl-L-cysteinyl-[prolipoprotein] + sn-glycerol 1-phosphate + H(+). It participates in protein modification; lipoprotein biosynthesis (diacylglyceryl transfer). Its function is as follows. Catalyzes the transfer of the diacylglyceryl group from phosphatidylglycerol to the sulfhydryl group of the N-terminal cysteine of a prolipoprotein, the first step in the formation of mature lipoproteins. The protein is Phosphatidylglycerol--prolipoprotein diacylglyceryl transferase of Protochlamydia amoebophila (strain UWE25).